We begin with the raw amino-acid sequence, 453 residues long: Exodeoxyribonuclease 7 large subunit (453 aa).

Belongs to the XseA family. In terms of assembly, heterooligomer composed of large and small subunits.

It localises to the cytoplasm. It carries out the reaction Exonucleolytic cleavage in either 5'- to 3'- or 3'- to 5'-direction to yield nucleoside 5'-phosphates.. Functionally, bidirectionally degrades single-stranded DNA into large acid-insoluble oligonucleotides, which are then degraded further into small acid-soluble oligonucleotides. The chain is Exodeoxyribonuclease 7 large subunit from Rickettsia typhi (strain ATCC VR-144 / Wilmington).